The following is a 207-amino-acid chain: dITP/XTP pyrophosphatase (207 aa).

A substrate-binding site is contributed by 10-15 (TRNAGK). Mg(2+)-binding residues include E43 and D72. Residue D72 is the Proton acceptor of the active site. Residues S73, 161 to 164 (FGYD), K184, and 189 to 190 (HR) contribute to the substrate site.

This sequence belongs to the HAM1 NTPase family. As to quaternary structure, homodimer. Mg(2+) is required as a cofactor.

It catalyses the reaction XTP + H2O = XMP + diphosphate + H(+). It carries out the reaction dITP + H2O = dIMP + diphosphate + H(+). The catalysed reaction is ITP + H2O = IMP + diphosphate + H(+). Functionally, pyrophosphatase that catalyzes the hydrolysis of nucleoside triphosphates to their monophosphate derivatives, with a high preference for the non-canonical purine nucleotides XTP (xanthosine triphosphate), dITP (deoxyinosine triphosphate) and ITP. Seems to function as a house-cleaning enzyme that removes non-canonical purine nucleotides from the nucleotide pool, thus preventing their incorporation into DNA/RNA and avoiding chromosomal lesions. The chain is dITP/XTP pyrophosphatase from Nitratidesulfovibrio vulgaris (strain ATCC 29579 / DSM 644 / CCUG 34227 / NCIMB 8303 / VKM B-1760 / Hildenborough) (Desulfovibrio vulgaris).